Reading from the N-terminus, the 178-residue chain is ATP-dependent protease subunit HslV (178 aa).

Residue threonine 7 is part of the active site. Na(+) is bound by residues glycine 162, cysteine 165, and threonine 168.

Belongs to the peptidase T1B family. HslV subfamily. As to quaternary structure, a double ring-shaped homohexamer of HslV is capped on each side by a ring-shaped HslU homohexamer. The assembly of the HslU/HslV complex is dependent on binding of ATP.

The protein resides in the cytoplasm. The enzyme catalyses ATP-dependent cleavage of peptide bonds with broad specificity.. Allosterically activated by HslU binding. Its function is as follows. Protease subunit of a proteasome-like degradation complex believed to be a general protein degrading machinery. This Burkholderia cenocepacia (strain ATCC BAA-245 / DSM 16553 / LMG 16656 / NCTC 13227 / J2315 / CF5610) (Burkholderia cepacia (strain J2315)) protein is ATP-dependent protease subunit HslV.